Consider the following 272-residue polypeptide: Shikimate dehydrogenase (NADP(+)) (272 aa).

Residues serine 14–serine 16 and threonine 61 each bind shikimate. Residue lysine 65 is the Proton acceptor of the active site. Glutamate 77 lines the NADP(+) pocket. The shikimate site is built by asparagine 86 and aspartate 102. NADP(+) contacts are provided by residues glycine 126 to alanine 130, asparagine 149 to arginine 154, and methionine 213. Tyrosine 215 serves as a coordination point for shikimate. Glycine 237 is a binding site for NADP(+).

It belongs to the shikimate dehydrogenase family. As to quaternary structure, homodimer.

It carries out the reaction shikimate + NADP(+) = 3-dehydroshikimate + NADPH + H(+). The protein operates within metabolic intermediate biosynthesis; chorismate biosynthesis; chorismate from D-erythrose 4-phosphate and phosphoenolpyruvate: step 4/7. In terms of biological role, involved in the biosynthesis of the chorismate, which leads to the biosynthesis of aromatic amino acids. Catalyzes the reversible NADPH linked reduction of 3-dehydroshikimate (DHSA) to yield shikimate (SA). In Escherichia coli O157:H7, this protein is Shikimate dehydrogenase (NADP(+)).